The chain runs to 634 residues: tRNA uridine 5-carboxymethylaminomethyl modification enzyme MnmG (634 aa).

An FAD-binding site is contributed by 14 to 19; sequence GGGHAG. NAD(+) is bound at residue 279–293; that stretch reads GPRYCPSIEDKVVRF.

It belongs to the MnmG family. Homodimer. Heterotetramer of two MnmE and two MnmG subunits. FAD serves as cofactor.

The protein resides in the cytoplasm. Its function is as follows. NAD-binding protein involved in the addition of a carboxymethylaminomethyl (cmnm) group at the wobble position (U34) of certain tRNAs, forming tRNA-cmnm(5)s(2)U34. This is tRNA uridine 5-carboxymethylaminomethyl modification enzyme MnmG from Xanthomonas axonopodis pv. citri (strain 306).